We begin with the raw amino-acid sequence, 301 residues long: Protein phosphatase 1 regulatory subunit 3B (301 aa).

A PP1-binding motif motif is present at residues 79-82; sequence RVSF. Residues 142-250 enclose the CBM21 domain; it reads RNRLQAESVC…SNKGLNYRIV (109 aa).

In terms of assembly, interacts with glycogen, PPP1CC catalytic subunit of PP1 and PYGL. Associates with glycogen particles. Forms complexes with debranching enzyme, glycogen phosphorylase, glycogen synthase and phosphorylase kinase which is necessary for its regulation of PP1 activity.

In terms of biological role, acts as a glycogen-targeting subunit for phosphatase PP1. Facilitates interaction of the PP1 with enzymes of the glycogen metabolism and regulates its activity. Suppresses the rate at which PP1 dephosphorylates (inactivates) glycogen phosphorylase and enhances the rate at which it activates glycogen synthase and therefore limits glycogen breakdown. The chain is Protein phosphatase 1 regulatory subunit 3B (ppp1r3b) from Xenopus tropicalis (Western clawed frog).